A 326-amino-acid chain; its full sequence is Biotin synthase (326 aa).

A Radical SAM core domain is found at 51 to 275; the sequence is NAVQRSTLLS…MMPTSFVRLS (225 aa). Positions 66, 70, and 73 each coordinate [4Fe-4S] cluster. Cys-110, Cys-141, Cys-201, and Arg-273 together coordinate [2Fe-2S] cluster.

The protein belongs to the radical SAM superfamily. Biotin synthase family. Homodimer. [4Fe-4S] cluster serves as cofactor. It depends on [2Fe-2S] cluster as a cofactor.

The catalysed reaction is (4R,5S)-dethiobiotin + (sulfur carrier)-SH + 2 reduced [2Fe-2S]-[ferredoxin] + 2 S-adenosyl-L-methionine = (sulfur carrier)-H + biotin + 2 5'-deoxyadenosine + 2 L-methionine + 2 oxidized [2Fe-2S]-[ferredoxin]. The protein operates within cofactor biosynthesis; biotin biosynthesis; biotin from 7,8-diaminononanoate: step 2/2. Catalyzes the conversion of dethiobiotin (DTB) to biotin by the insertion of a sulfur atom into dethiobiotin via a radical-based mechanism. This Aromatoleum aromaticum (strain DSM 19018 / LMG 30748 / EbN1) (Azoarcus sp. (strain EbN1)) protein is Biotin synthase.